Consider the following 752-residue polypeptide: Protein SEY1 homolog 1 (752 aa).

The Cytoplasmic segment spans residues 1-674; it reads MIKNQGDRYH…QKHKQDFLQN (674 aa). Positions 40–265 constitute a GB1/RHD3-type G domain; that stretch reads GKKYNIVSII…YEKNVRWSDM (226 aa). GTP is bound at residue 50 to 57; it reads GSQSTGKS. The stretch at 445-465 forms a coiled coil; the sequence is NQLKSFVEAQLASFKQQLDNI. A helical transmembrane segment spans residues 675-695; it reads IPKPFWFLLLFFMYDDVLRWM. Residues 696–698 are Lumenal-facing; the sequence is GNP. The chain crosses the membrane as a helical span at residues 699–719; sequence LFLYPILIILCFIGFCIAIGL. Residues 720–752 are Cytoplasmic-facing; the sequence is HSLPKLAFQTVFRTINQALLPLIFGGISKLKTS.

This sequence belongs to the TRAFAC class dynamin-like GTPase superfamily. GB1/RHD3 GTPase family. RHD3 subfamily.

The protein localises to the endoplasmic reticulum membrane. Functionally, probable GTP-binding protein that may be involved in cell development. The protein is Protein SEY1 homolog 1 of Paramecium tetraurelia.